The chain runs to 104 residues: ATP-dependent Clp protease adapter protein ClpS (104 aa).

Belongs to the ClpS family. As to quaternary structure, binds to the N-terminal domain of the chaperone ClpA.

Involved in the modulation of the specificity of the ClpAP-mediated ATP-dependent protein degradation. This Oleidesulfovibrio alaskensis (strain ATCC BAA-1058 / DSM 17464 / G20) (Desulfovibrio alaskensis) protein is ATP-dependent Clp protease adapter protein ClpS.